The sequence spans 365 residues: Chloroplast protein FOR GROWTH AND FERTILITY 1 (365 aa).

Disordered stretches follow at residues 1–30 and 62–90; these read MERL…LPRL and YTPI…PGFL. A chloroplast-targeting transit peptide spans 1–79; sequence MERLLQPSSS…TNNSFNGSPK (79 aa). 2 stretches are compositionally biased toward low complexity: residues 7–24 and 62–77; these read PSSS…SRTS and YTPI…FNGS. 7 consecutive transmembrane segments (helical) span residues 109 to 129, 139 to 159, 182 to 202, 218 to 238, 274 to 294, 301 to 321, and 345 to 365; these read VILI…PPAF, GWLT…LSGP, ALWG…FLLL, IVGL…SEIP, GVVH…LALP, AFLI…TAFI, and LVAI…FSLY.

As to expression, mostly expressed in leaves and flowers, to a lower extent, in stems, roots, floral bud, inflorescence and siliques, and, barely, in seedlings.

The protein localises to the plastid. It is found in the chloroplast membrane. It localises to the plastid membrane. Functionally, together with CGF2, essential protein which supports female gametogenesis and embryogenesis, probably by securing local energy supply. The chain is Chloroplast protein FOR GROWTH AND FERTILITY 1 from Arabidopsis thaliana (Mouse-ear cress).